The primary structure comprises 426 residues: MAAPQLIFVDGTFAELAQEMAEYVQIGEQVKPYLAKEQNEEALQAIIEASHVLNSIPEKEFTGAYNLLIHLVLQSKDPLKYLPPLCGNLQKPITSSPAHGFTLAANALSTVFNLLEPDNPTRFNVLLQITRFIRQHGQYDLLKPRLENLEGWFNLWNTSDEDQRRLYVEVSDTAAEAGDDEDSYRYLIKAIATFGREDQDEITSEEAQKLSLKAVRLAISHPARFDFQDLRILPSVQALGDSHPVYSQLLDIFIEQDLEDYNDFKDEHEGWVEKEKLDNEKLQRKMRLLTFASLAASTPNREIPYANIAKALQIPSEEVEMWTIDVVRAKLVEGRLSQQQKVFLVHRTTYRVFGEKQWRELATRVDQYKSIVDQLLVFLRKGQADVEGQREREQQELERKLAGAGMGGGPGGDRRRQQKPRTDEDD.

Positions 179 to 350 constitute a PCI domain; sequence DDEDSYRYLI…KVFLVHRTTY (172 aa). Residues 385-401 are compositionally biased toward basic and acidic residues; that stretch reads DVEGQREREQQELERKL. The tract at residues 385 to 426 is disordered; the sequence is DVEGQREREQQELERKLAGAGMGGGPGGDRRRQQKPRTDEDD.

Belongs to the eIF-3 subunit M family. As to quaternary structure, component of the eukaryotic translation initiation factor 3 (eIF-3) complex.

It localises to the cytoplasm. Its function is as follows. Component of the eukaryotic translation initiation factor 3 (eIF-3) complex, which is involved in protein synthesis of a specialized repertoire of mRNAs and, together with other initiation factors, stimulates binding of mRNA and methionyl-tRNAi to the 40S ribosome. The eIF-3 complex specifically targets and initiates translation of a subset of mRNAs involved in cell proliferation. This chain is Eukaryotic translation initiation factor 3 subunit M, found in Chaetomium globosum (strain ATCC 6205 / CBS 148.51 / DSM 1962 / NBRC 6347 / NRRL 1970) (Soil fungus).